The chain runs to 183 residues: Putative 3-methyladenine DNA glycosylase (183 aa).

This sequence belongs to the DNA glycosylase MPG family.

This Legionella pneumophila subsp. pneumophila (strain Philadelphia 1 / ATCC 33152 / DSM 7513) protein is Putative 3-methyladenine DNA glycosylase.